The sequence spans 131 residues: Chromatin accessibility complex protein 1 (131 aa).

A2 is modified (N-acetylalanine). A coiled-coil region spans residues 100-124 (ASKYLKMLKEEKREEDEENDNDNES). An N6-acetyllysine modification is found at K102. The interval 109–131 (EEKREEDEENDNDNESDHDEADS) is disordered. Residues 112-131 (REEDEENDNDNESDHDEADS) are compositionally biased toward acidic residues. Phosphoserine is present on S124.

In terms of assembly, heterodimer with POLE3; binds to DNA. Component of the CHRAC ISWI chromatin remodeling complex at least composed of SMARCA5/SNF2H, BAZ1A/ACF1, CHRAC1 and POLE3; the complex preferentially binds DNA through the CHRAC1-POLE3 heterodimer and possesses ATP-dependent nucleosome-remodeling activity. Within the complex, the heterodimer with POLE3 interacts with SMARCA5/SNF2H; the interaction is direct and enhances nucleosome sliding activity by the SMARCA5/SNF2H and BAZ1A/ACF1 interaction. Within the complex, the heterodimer with POLE3 interacts with BAZ1A/ACF1; the interactions are direct. Expressed in heart, brain, placenta, lung, liver, skeletal muscle, kidney and pancreas.

Its subcellular location is the nucleus. Forms a complex with DNA polymerase epsilon subunit POLE3 and binds naked DNA, which is then incorporated into chromatin, aided by the nucleosome remodeling activity of ISWI/SNF2H and ACF1. Does not enhance nucleosome sliding activity of the ACF-5 ISWI chromatin remodeling complex. The sequence is that of Chromatin accessibility complex protein 1 (CHRAC1) from Homo sapiens (Human).